A 384-amino-acid chain; its full sequence is MAKHLFTSESVSEGHPDKIADQISDAVLDAILEQDPKARVACETYVKTGMVLVGGEITTSAWVDIEEITRNTVREIGYVHSDMGFDANSCAVLSAIGKQSPDINQGVDRADPLEQGAGDQGLMFGYATNETDVLMPAPVTYAHRLVQRQAEVRKNGTLPWLRPDAKSQVTFQYDDGKIVGIDAVVLSTQHAEDIDQKSLQEAVMEEIIKPILPTEWLNASTKFFINPTGRFVIGGPMGDCGLTGRKIIVDTYGGMARHGGGAFSGKDPSKVDRSAAYAARYVAKNIVAAGLADRCEIQVSYAIGVAEPTSIMVETFGTEKVPSEQLTLLVREFFDLRPYGLIQMLDLLHPIYKETAAYGHFGREHFPWEKTDKAALLREAAGLK.

Residue histidine 15 participates in ATP binding. Aspartate 17 provides a ligand contact to Mg(2+). Glutamate 43 serves as a coordination point for K(+). L-methionine contacts are provided by glutamate 56 and glutamine 99. Residues 99 to 109 (QSPDINQGVDR) are flexible loop. ATP contacts are provided by residues 164 to 166 (DAK), 230 to 231 (RF), aspartate 239, 245 to 246 (RK), alanine 262, and lysine 266. Position 239 (aspartate 239) interacts with L-methionine. Lysine 270 lines the L-methionine pocket.

It belongs to the AdoMet synthase family. In terms of assembly, homotetramer; dimer of dimers. It depends on Mg(2+) as a cofactor. Requires K(+) as cofactor.

It localises to the cytoplasm. It carries out the reaction L-methionine + ATP + H2O = S-adenosyl-L-methionine + phosphate + diphosphate. It participates in amino-acid biosynthesis; S-adenosyl-L-methionine biosynthesis; S-adenosyl-L-methionine from L-methionine: step 1/1. In terms of biological role, catalyzes the formation of S-adenosylmethionine (AdoMet) from methionine and ATP. The overall synthetic reaction is composed of two sequential steps, AdoMet formation and the subsequent tripolyphosphate hydrolysis which occurs prior to release of AdoMet from the enzyme. The protein is S-adenosylmethionine synthase of Klebsiella pneumoniae subsp. pneumoniae (strain ATCC 700721 / MGH 78578).